We begin with the raw amino-acid sequence, 297 residues long: MNLGTLVSETRNPQTMDLDALPTPELVKRFNEQDTLVAEAVKATLPDVARAVDAAAAALKSGGRIIYMGAGTSGRLGVLDASECPPTFGVPHGLVVGLIAGGPGALLKAVEGAEDSQQAGEDDLVALNLQEQDLVVGLAASGRTPYVIGGLRYARQSGCTTVAVSCNPDSPIAREANIAISPVVGPEALTGSTRLKSGTAQKMVLNMISTGAMVKFGKVYQNLMVDMKATNVKLVDRACRMVVEATGIGREEAEALLKQTDFEVKPAILMALTGLDAAAAREKLAAHQGFLRAALEH.

The 164-residue stretch at 55–218 (AAAALKSGGR…STGAMVKFGK (164 aa)) folds into the SIS domain. Residue Glu83 is the Proton donor of the active site. The active site involves Glu114.

Belongs to the GCKR-like family. MurNAc-6-P etherase subfamily. Homodimer.

It catalyses the reaction N-acetyl-D-muramate 6-phosphate + H2O = N-acetyl-D-glucosamine 6-phosphate + (R)-lactate. It functions in the pathway amino-sugar metabolism; 1,6-anhydro-N-acetylmuramate degradation. It participates in amino-sugar metabolism; N-acetylmuramate degradation. Its pathway is cell wall biogenesis; peptidoglycan recycling. Specifically catalyzes the cleavage of the D-lactyl ether substituent of MurNAc 6-phosphate, producing GlcNAc 6-phosphate and D-lactate. Together with AnmK, is also required for the utilization of anhydro-N-acetylmuramic acid (anhMurNAc) either imported from the medium or derived from its own cell wall murein, and thus plays a role in cell wall recycling. This Salmonella paratyphi A (strain ATCC 9150 / SARB42) protein is N-acetylmuramic acid 6-phosphate etherase.